A 218-amino-acid chain; its full sequence is Large ribosomal subunit protein uL3 (218 aa).

A disordered region spans residues 126 to 163 (HGFSRGPMTHGSKNHRQPGSIGAGTTPGRIYPGKRMSG).

Belongs to the universal ribosomal protein uL3 family. In terms of assembly, part of the 50S ribosomal subunit. Forms a cluster with proteins L14 and L19.

Its function is as follows. One of the primary rRNA binding proteins, it binds directly near the 3'-end of the 23S rRNA, where it nucleates assembly of the 50S subunit. The chain is Large ribosomal subunit protein uL3 from Synechococcus sp. (strain CC9311).